The primary structure comprises 596 residues: Delta(24(24(1)))-sterol reductase (596 aa).

The segment at 1 to 122 (MSSRYSLRQT…GHATNGHATS (122 aa)) is disordered. A compositionally biased stretch (gly residues) spans 98 to 112 (NGNGNGYTNGHGNGN). Transmembrane regions (helical) follow at residues 168 to 188 (FGTA…WIGA), 225 to 245 (VWAW…LLPG), 269 to 289 (WSLY…IWPL), 296 to 316 (FGPL…VAYF), 353 to 373 (MFFE…GTAA), 381 to 401 (YVSG…NACA), 419 to 439 (GFML…HCTI), and 454 to 474 (GILA…DSCN). NADP(+)-binding positions include K477, R481, L516, and 528-529 (HY). A helical transmembrane segment spans residues 535–557 (FAVSWGLITGFESPFPWFYPVFF). Residues D568, 572–576 (CRRKY), and Y583 each bind NADP(+).

It belongs to the ERG4/ERG24 family.

It localises to the endoplasmic reticulum membrane. It catalyses the reaction ergosterol + NADP(+) = ergosta-5,7,22,24(28)-tetraen-3beta-ol + NADPH + H(+). It participates in steroid metabolism; ergosterol biosynthesis. Functionally, delta(24(24(1)))-sterol reductase; part of the third module of ergosterol biosynthesis pathway that includes the late steps of the pathway. ERG4 catalyzes the last step of ergosterol biosynthesis by converting ergosta-5,7,22,24(28)-tetraen-3beta-ol into ergosterol. The third module or late pathway involves the ergosterol synthesis itself through consecutive reactions that mainly occur in the endoplasmic reticulum (ER) membrane. Firstly, the squalene synthase ERG9 catalyzes the condensation of 2 farnesyl pyrophosphate moieties to form squalene, which is the precursor of all steroids. Squalene synthase is crucial for balancing the incorporation of farnesyl diphosphate (FPP) into sterol and nonsterol isoprene synthesis. Secondly, squalene is converted into lanosterol by the consecutive action of the squalene epoxidase ERG1 and the lanosterol synthase ERG7. Then, the delta(24)-sterol C-methyltransferase ERG6 methylates lanosterol at C-24 to produce eburicol. Eburicol is the substrate of the sterol 14-alpha demethylase encoded by CYP51A, CYP51B and CYP51C, to yield 4,4,24-trimethyl ergosta-8,14,24(28)-trienol. CYP51B encodes the enzyme primarily responsible for sterol 14-alpha-demethylation, and plays an essential role in ascospore formation. CYP51A encodes an additional sterol 14-alpha-demethylase, induced on ergosterol depletion and responsible for the intrinsic variation in azole sensitivity. The third CYP51 isoform, CYP51C, does not encode a sterol 14-alpha-demethylase, but is required for full virulence on host wheat ears. The C-14 reductase ERG24 then reduces the C14=C15 double bond which leads to 4,4-dimethylfecosterol. A sequence of further demethylations at C-4, involving the C-4 demethylation complex containing the C-4 methylsterol oxidases ERG25, the sterol-4-alpha-carboxylate 3-dehydrogenase ERG26 and the 3-keto-steroid reductase ERG27, leads to the production of fecosterol via 4-methylfecosterol. ERG28 has a role as a scaffold to help anchor ERG25, ERG26 and ERG27 to the endoplasmic reticulum. The C-8 sterol isomerase ERG2 then catalyzes the reaction which results in unsaturation at C-7 in the B ring of sterols and thus converts fecosterol to episterol. The sterol-C5-desaturases ERG3A and ERG3BB then catalyze the introduction of a C-5 double bond in the B ring to produce 5-dehydroepisterol. The C-22 sterol desaturases ERG5A and ERG5B further convert 5-dehydroepisterol into ergosta-5,7,22,24(28)-tetraen-3beta-ol by forming the C-22(23) double bond in the sterol side chain. Finally, ergosta-5,7,22,24(28)-tetraen-3beta-ol is substrate of the C-24(28) sterol reductase ERG4 to produce ergosterol. The sequence is that of Delta(24(24(1)))-sterol reductase from Gibberella zeae (strain ATCC MYA-4620 / CBS 123657 / FGSC 9075 / NRRL 31084 / PH-1) (Wheat head blight fungus).